Here is a 146-residue protein sequence, read N- to C-terminus: Nitric oxide reductase subunit C (146 aa).

The helical; Signal-anchor transmembrane segment at 13–29 (IYFGGSVFFILLFLALT) threads the bilayer. Heme c-binding residues include Cys61, Cys64, and His65.

In terms of assembly, heterodimer of cytochromes b (large subunit) and c (small subunit).

The protein localises to the cell membrane. In terms of biological role, component of the anaerobic respiratory chain that transforms nitrate to dinitrogen (denitrification). The sequence is that of Nitric oxide reductase subunit C (norC) from Pseudomonas aeruginosa (strain ATCC 15692 / DSM 22644 / CIP 104116 / JCM 14847 / LMG 12228 / 1C / PRS 101 / PAO1).